The sequence spans 427 residues: Enolase (427 aa).

Gln-162 is a (2R)-2-phosphoglycerate binding site. Residue Glu-206 is the Proton donor of the active site. Residues Asp-243, Glu-286, and Asp-313 each contribute to the Mg(2+) site. Lys-338, Arg-367, Ser-368, and Lys-389 together coordinate (2R)-2-phosphoglycerate. Lys-338 (proton acceptor) is an active-site residue.

The protein belongs to the enolase family. Mg(2+) is required as a cofactor.

It is found in the cytoplasm. Its subcellular location is the secreted. The protein localises to the cell surface. The enzyme catalyses (2R)-2-phosphoglycerate = phosphoenolpyruvate + H2O. It functions in the pathway carbohydrate degradation; glycolysis; pyruvate from D-glyceraldehyde 3-phosphate: step 4/5. Catalyzes the reversible conversion of 2-phosphoglycerate (2-PG) into phosphoenolpyruvate (PEP). It is essential for the degradation of carbohydrates via glycolysis. In Methanopyrus kandleri (strain AV19 / DSM 6324 / JCM 9639 / NBRC 100938), this protein is Enolase.